The chain runs to 335 residues: Glycerol-3-phosphate dehydrogenase [NAD(P)+] (335 aa).

K109 contacts NADPH. K109, G141, and S143 together coordinate sn-glycerol 3-phosphate. NADPH is bound at residue A145. Sn-glycerol 3-phosphate is bound by residues K196, D249, S259, R260, and N261. The active-site Proton acceptor is K196. R260 lines the NADPH pocket. Position 283 (E283) interacts with NADPH.

The protein belongs to the NAD-dependent glycerol-3-phosphate dehydrogenase family.

It is found in the cytoplasm. The enzyme catalyses sn-glycerol 3-phosphate + NAD(+) = dihydroxyacetone phosphate + NADH + H(+). It carries out the reaction sn-glycerol 3-phosphate + NADP(+) = dihydroxyacetone phosphate + NADPH + H(+). It functions in the pathway membrane lipid metabolism; glycerophospholipid metabolism. In terms of biological role, catalyzes the reduction of the glycolytic intermediate dihydroxyacetone phosphate (DHAP) to sn-glycerol 3-phosphate (G3P), the key precursor for phospholipid synthesis. The chain is Glycerol-3-phosphate dehydrogenase [NAD(P)+] from Mycoplasma mobile (strain ATCC 43663 / 163K / NCTC 11711) (Mesomycoplasma mobile).